Consider the following 271-residue polypeptide: DNA repair protein RecO (271 aa).

Belongs to the RecO family.

Involved in DNA repair and RecF pathway recombination. The protein is DNA repair protein RecO of Synechococcus sp. (strain CC9311).